The following is an 89-amino-acid chain: Small ribosomal subunit protein uS14A (89 aa).

It belongs to the universal ribosomal protein uS14 family. In terms of assembly, part of the 30S ribosomal subunit. Contacts proteins S3 and S10.

Its function is as follows. Binds 16S rRNA, required for the assembly of 30S particles and may also be responsible for determining the conformation of the 16S rRNA at the A site. The polypeptide is Small ribosomal subunit protein uS14A (Bacillus velezensis (strain DSM 23117 / BGSC 10A6 / LMG 26770 / FZB42) (Bacillus amyloliquefaciens subsp. plantarum)).